A 113-amino-acid polypeptide reads, in one-letter code: Ribonuclease P protein component (113 aa).

This sequence belongs to the RnpA family. As to quaternary structure, consists of a catalytic RNA component (M1 or rnpB) and a protein subunit.

It carries out the reaction Endonucleolytic cleavage of RNA, removing 5'-extranucleotides from tRNA precursor.. In terms of biological role, RNaseP catalyzes the removal of the 5'-leader sequence from pre-tRNA to produce the mature 5'-terminus. It can also cleave other RNA substrates such as 4.5S RNA. The protein component plays an auxiliary but essential role in vivo by binding to the 5'-leader sequence and broadening the substrate specificity of the ribozyme. This Clostridium novyi (strain NT) protein is Ribonuclease P protein component.